Reading from the N-terminus, the 252-residue chain is 1-(5-phosphoribosyl)-5-[(5-phosphoribosylamino)methylideneamino] imidazole-4-carboxamide isomerase (252 aa).

D10 (proton acceptor) is an active-site residue. D129 serves as the catalytic Proton donor.

Belongs to the HisA/HisF family.

The protein localises to the cytoplasm. It carries out the reaction 1-(5-phospho-beta-D-ribosyl)-5-[(5-phospho-beta-D-ribosylamino)methylideneamino]imidazole-4-carboxamide = 5-[(5-phospho-1-deoxy-D-ribulos-1-ylimino)methylamino]-1-(5-phospho-beta-D-ribosyl)imidazole-4-carboxamide. The protein operates within amino-acid biosynthesis; L-histidine biosynthesis; L-histidine from 5-phospho-alpha-D-ribose 1-diphosphate: step 4/9. The chain is 1-(5-phosphoribosyl)-5-[(5-phosphoribosylamino)methylideneamino] imidazole-4-carboxamide isomerase from Frankia casuarinae (strain DSM 45818 / CECT 9043 / HFP020203 / CcI3).